Consider the following 433-residue polypeptide: G-protein coupled receptor 22 (433 aa).

The Extracellular segment spans residues 1–45; the sequence is MCFSPILEINMQSESNITVRDDIDDINTNMYQPLSYPLSFQVSLT. An N-linked (GlcNAc...) asparagine glycan is attached at Asn-16. A helical membrane pass occupies residues 46–66; it reads GFLMLEIVLGLGSNLTVLVLY. The Cytoplasmic portion of the chain corresponds to 67–85; sequence CMKSNLINSVSNIITMNLH. A helical membrane pass occupies residues 86–106; the sequence is VLDVIICVGCIPLTIVILLLS. Over 107–115 the chain is Extracellular; the sequence is LESNTALIC. The chain crosses the membrane as a helical span at residues 116-136; it reads CFHEACVSFASVSTAINVFAI. The Cytoplasmic segment spans residues 137–156; it reads TLDRYDISVKPANRILTMGR. The helical transmembrane segment at 157-177 threads the bilayer; it reads AVMLMISIWIFSFFSFLIPFI. The Extracellular segment spans residues 178–208; that stretch reads EVNFFSLQSGNTWENKTLLCVSTNEYYTELG. A glycan (N-linked (GlcNAc...) asparagine) is linked at Asn-192. Residues 209–229 form a helical membrane-spanning segment; the sequence is MYYHLLVQIPIFFFTVVVMLI. The Cytoplasmic portion of the chain corresponds to 230–315; the sequence is TYTKILQALN…ERQKRVFRMS (86 aa). The chain crosses the membrane as a helical span at residues 316–336; it reads LLIISTFLLCWTPISVLNTTI. Topologically, residues 337–349 are extracellular; the sequence is LCLGPSDLLVKLR. The helical transmembrane segment at 350–370 threads the bilayer; that stretch reads LCFLVMAYGTTIFHPLLYAFT. Over 371-433 the chain is Cytoplasmic; the sequence is RQKFQKVLKS…KCLVPQVVTD (63 aa).

The protein belongs to the G-protein coupled receptor 1 family. In terms of tissue distribution, high expression in adult and fetal heart tissue. Expressed in the brain, with enrichment in the accumbens, amygdala, cerebellum, cortex, and hippocampus regions.

Its subcellular location is the cell membrane. Functionally, orphan G-protein coupled receptor. Seems to act through a G(i)/G(o) mediated pathway. May be involved in ciliogenesis. The chain is G-protein coupled receptor 22 from Homo sapiens (Human).